A 74-amino-acid chain; its full sequence is Histone H1.C8/H1.M1 (74 aa).

The segment at 1–74 (MSDAAVPPKK…KAVKKAPKKK (74 aa)) is disordered. Over residues 11 to 74 (ASPKKAAAKK…KAVKKAPKKK (64 aa)) the composition is skewed to basic residues.

The protein resides in the nucleus. Its subcellular location is the chromosome. In Trypanosoma cruzi, this protein is Histone H1.C8/H1.M1.